The following is a 525-amino-acid chain: GMP synthase [glutamine-hydrolyzing] (525 aa).

The Glutamine amidotransferase type-1 domain occupies 9–207; it reads RILILDFGSQ…VRDICQCEAL (199 aa). Cys86 acts as the Nucleophile in catalysis. Active-site residues include His181 and Glu183. The GMPS ATP-PPase domain maps to 208–400; the sequence is WTPAKIIDDA…LGLPYDMLYR (193 aa). 235 to 241 contributes to the ATP binding site; it reads SGGVDSS.

Homodimer.

The enzyme catalyses XMP + L-glutamine + ATP + H2O = GMP + L-glutamate + AMP + diphosphate + 2 H(+). It functions in the pathway purine metabolism; GMP biosynthesis; GMP from XMP (L-Gln route): step 1/1. In terms of biological role, catalyzes the synthesis of GMP from XMP. This is GMP synthase [glutamine-hydrolyzing] from Salmonella newport (strain SL254).